The following is an 82-amino-acid chain: MVTIRLQRGGAKKRPFYQVVVSDSRCARDGRFIERVGFFNPVASGSAETLNLDLARIEHWVATGAAVSDRVAKLIKDATKAA.

Belongs to the bacterial ribosomal protein bS16 family.

This Aeromonas salmonicida (strain A449) protein is Small ribosomal subunit protein bS16.